We begin with the raw amino-acid sequence, 176 residues long: Ribosome maturation factor RimM (176 aa).

In terms of domain architecture, PRC barrel spans 102-175; it reads KNDYYWNDII…TDKKFILVQW (74 aa).

It belongs to the RimM family. As to quaternary structure, binds ribosomal protein uS19.

The protein resides in the cytoplasm. Functionally, an accessory protein needed during the final step in the assembly of 30S ribosomal subunit, possibly for assembly of the head region. Essential for efficient processing of 16S rRNA. May be needed both before and after RbfA during the maturation of 16S rRNA. It has affinity for free ribosomal 30S subunits but not for 70S ribosomes. The sequence is that of Ribosome maturation factor RimM from Buchnera aphidicola subsp. Acyrthosiphon pisum (strain APS) (Acyrthosiphon pisum symbiotic bacterium).